Consider the following 503-residue polypeptide: Lanosterol 14-alpha demethylase (503 aa).

The chain crosses the membrane as a helical span at residues 24-44 (GNLLSTLLIACAFTLSLVYLF). A heme-binding site is contributed by Cys-449.

The protein belongs to the cytochrome P450 family. Heme serves as cofactor. In terms of processing, ubiquitinated by MARCHF6, leading to proteasomal degradation.

It localises to the endoplasmic reticulum membrane. It is found in the microsome membrane. It catalyses the reaction a 14alpha-methyl steroid + 3 reduced [NADPH--hemoprotein reductase] + 3 O2 = a Delta(14) steroid + formate + 3 oxidized [NADPH--hemoprotein reductase] + 4 H2O + 4 H(+). The enzyme catalyses lanosterol + 3 reduced [NADPH--hemoprotein reductase] + 3 O2 = 4,4-dimethyl-5alpha-cholesta-8,14,24-trien-3beta-ol + formate + 3 oxidized [NADPH--hemoprotein reductase] + 4 H2O + 4 H(+). It carries out the reaction 24,25-dihydrolanosterol + 3 reduced [NADPH--hemoprotein reductase] + 3 O2 = 4,4-dimethyl-8,14-cholestadien-3beta-ol + formate + 3 oxidized [NADPH--hemoprotein reductase] + 4 H2O + 4 H(+). The catalysed reaction is a 14alpha-methyl steroid + reduced [NADPH--hemoprotein reductase] + O2 = a 14alpha-hydroxymethyl steroid + oxidized [NADPH--hemoprotein reductase] + H2O + H(+). It catalyses the reaction a 14alpha-hydroxymethyl steroid + reduced [NADPH--hemoprotein reductase] + O2 = a 14alpha-formyl steroid + oxidized [NADPH--hemoprotein reductase] + 2 H2O + H(+). The enzyme catalyses a 14alpha-formyl steroid + reduced [NADPH--hemoprotein reductase] + O2 = a Delta(14) steroid + formate + oxidized [NADPH--hemoprotein reductase] + H2O + 2 H(+). It carries out the reaction lanosterol + reduced [NADPH--hemoprotein reductase] + O2 = 32-hydroxylanosterol + oxidized [NADPH--hemoprotein reductase] + H2O + H(+). The catalysed reaction is 32-hydroxylanosterol + reduced [NADPH--hemoprotein reductase] + O2 = 32-oxolanosterol + oxidized [NADPH--hemoprotein reductase] + 2 H2O + H(+). It catalyses the reaction 32-oxolanosterol + reduced [NADPH--hemoprotein reductase] + O2 = 4,4-dimethyl-5alpha-cholesta-8,14,24-trien-3beta-ol + formate + oxidized [NADPH--hemoprotein reductase] + H2O + 2 H(+). The enzyme catalyses 24,25-dihydrolanosterol + reduced [NADPH--hemoprotein reductase] + O2 = 32-hydroxy-24,25-dihydrolanosterol + oxidized [NADPH--hemoprotein reductase] + H2O + H(+). It carries out the reaction 32-hydroxy-24,25-dihydrolanosterol + reduced [NADPH--hemoprotein reductase] + O2 = 32-oxo-24,25-dihydrolanosterol + oxidized [NADPH--hemoprotein reductase] + 2 H2O + H(+). The catalysed reaction is 32-oxo-24,25-dihydrolanosterol + reduced [NADPH--hemoprotein reductase] + O2 = 4,4-dimethyl-8,14-cholestadien-3beta-ol + formate + oxidized [NADPH--hemoprotein reductase] + H2O + 2 H(+). The protein operates within steroid biosynthesis; zymosterol biosynthesis; zymosterol from lanosterol: step 1/6. Its activity is regulated as follows. Inhibited by azalanstat. Inhibited by azole antifungal agents ketoconazole, itraconazole and fluconazole. Functionally, sterol 14alpha-demethylase that plays a critical role in the cholesterol biosynthesis pathway, being cholesterol the major sterol component in mammalian membranes as well as a precursor for bile acid and steroid hormone synthesis. Cytochrome P450 monooxygenase that catalyzes the three-step oxidative removal of the 14alpha-methyl group (C-32) of sterols such as lanosterol (lanosta-8,24-dien-3beta-ol) and 24,25-dihydrolanosterol (DHL) in the form of formate, and converts the sterols to 4,4-dimethyl-5alpha-cholesta-8,14,24-trien-3beta-ol and 4,4-dimethyl-8,14-cholestadien-3beta-ol, respectively, which are intermediates of cholesterol biosynthesis. Can also demethylate substrates not intrinsic to mammals, such as eburicol (24-methylene-24,25-dihydrolanosterol), but at a lower rate than DHL. The protein is Lanosterol 14-alpha demethylase of Rattus norvegicus (Rat).